The chain runs to 463 residues: RuvB-like 2 (463 aa).

At alanine 2 the chain carries N-acetylalanine. Residue lysine 9 forms a Glycyl lysine isopeptide (Lys-Gly) (interchain with G-Cter in SUMO2) linkage. 77 to 84 contributes to the ATP binding site; sequence GQPGTGKT. Serine 437 bears the Phosphoserine mark. Residues lysine 444 and lysine 456 each participate in a glycyl lysine isopeptide (Lys-Gly) (interchain with G-Cter in SUMO2) cross-link.

It belongs to the RuvB family. In terms of assembly, forms homohexameric rings. Can form a dodecamer with RUVBL1 made of two stacked hexameric rings; however, even though RUVBL1 and RUVBL2 are present in equimolar ratio, the oligomeric status of each hexamer is not known. Oligomerization may regulate binding to nucleic acids and conversely, binding to nucleic acids may affect the dodecameric assembly. Interaction of the complex with DHX34 results in conformational changes of the N-terminus of the RUVBL2 subunits, resulting in loss of nucleotide binding ability and ATP hydrolysis of the complex. Interacts with the transcriptional activation domain of MYC. Interacts with ATF2. Component of the RNA polymerase II holoenzyme complex. May also act to bridge the LEF1/TCF1-CTNNB1 complex and TBP. Component of the NuA4 histone acetyltransferase complex which contains the catalytic subunit KAT5/TIP60 and the subunits EP400, TRRAP/PAF400, BRD8/SMAP, EPC1, DMAP1/DNMAP1, RUVBL1/TIP49, RUVBL2, ING3, actin, ACTL6A/BAF53A, MORF4L1/MRG15, MORF4L2/MRGX, MRGBP, YEATS4/GAS41, VPS72/YL1 and MEAF6. The NuA4 complex interacts with MYC and the adenovirus E1A protein. RUVBL2 interacts with EP400. Component of a NuA4-related complex which contains EP400, TRRAP/PAF400, SRCAP, BRD8/SMAP, EPC1, DMAP1/DNMAP1, RUVBL1/TIP49, RUVBL2, actin, ACTL6A/BAF53A, VPS72 and YEATS4/GAS41. Interacts with NPAT. Component of the chromatin-remodeling INO80 complex; specifically part of a complex module associated with the helicase ATP-binding and the helicase C-terminal domain of INO80. Component of some MLL1/MLL complex, at least composed of the core components KMT2A/MLL1, ASH2L, HCFC1/HCF1, WDR5 and RBBP5, as well as the facultative components BACC1, CHD8, E2F6, HSP70, INO80C, KANSL1, LAS1L, MAX, MCRS1, MGA, MYST1/MOF, PELP1, PHF20, PRP31, RING2, RUVB1/TIP49A, RUVB2/TIP49B, SENP3, TAF1, TAF4, TAF6, TAF7, TAF9 and TEX10. Interacts with IGHMBP2. Interacts with TELO2. Interacts with HINT1. Component of a SWR1-like complex. Component of the R2TP complex composed at least of RUVBL1, RUVBL2, RPAP3 and PIHD1. Component of the PAQosome complex which is responsible for the biogenesis of several protein complexes and which consists of R2TP complex members RUVBL1, RUVBL2, RPAP3 and PIH1D1, URI complex members PFDN2, PFDN6, PDRG1, UXT and URI1 as well as ASDURF, POLR2E and DNAAF10/WDR92. Interacts with ITFG1. Interacts with ZMYND10. Interacts with WAC; WAC positively regulates MTOR activity by promoting the assembly of the TTT complex composed of TELO2, TTI1 and TTI2 and the RUVBL complex composed of RUVBL1 and RUVBL2 into the TTT-RUVBL complex which leads to the dimerization of the mTORC1 complex and its subsequent activation. Forms a complex with APPL1 and APPL2. Interacts with ZNHIT2 (via HIT-type zinc finger) in the presence of ATP or ADP; shows a stronger interaction in the presence of ADP. The RUVBL1/RUVBL2 complex interacts with ZNHIT1 (via HIT-type zinc finger), ZNHIT3 (via HIT-type zinc finger), ZNHIT6 (via HIT-type zinc finger) and DDX59/ZNHIT5 (via HIT-type zinc finger) in the presence of ADP. Interacts with NOPCHAP1; the interaction is direct and disrupted upon ATP binding. Interacts with SMG1.

The protein localises to the nucleus matrix. It is found in the nucleus. Its subcellular location is the nucleoplasm. It localises to the cytoplasm. The protein resides in the membrane. The protein localises to the dynein axonemal particle. It catalyses the reaction ATP + H2O = ADP + phosphate + H(+). In terms of biological role, possesses single-stranded DNA-stimulated ATPase and ATP-dependent DNA helicase (5' to 3') activity; hexamerization is thought to be critical for ATP hydrolysis and adjacent subunits in the ring-like structure contribute to the ATPase activity. Component of the NuA4 histone acetyltransferase complex which is involved in transcriptional activation of select genes principally by acetylation of nucleosomal histones H4 and H2A. This modification may both alter nucleosome-DNA interactions and promote interaction of the modified histones with other proteins which positively regulate transcription. This complex may be required for the activation of transcriptional programs associated with oncogene and proto-oncogene mediated growth induction, tumor suppressor mediated growth arrest and replicative senescence, apoptosis, and DNA repair. The NuA4 complex ATPase and helicase activities seem to be, at least in part, contributed by the association of RUVBL1 and RUVBL2 with EP400. NuA4 may also play a direct role in DNA repair when recruited to sites of DNA damage. Component of a SWR1-like complex that specifically mediates the removal of histone H2A.Z/H2AZ1 from the nucleosome. Proposed core component of the chromatin remodeling INO80 complex which exhibits DNA- and nucleosome-activated ATPase activity and catalyzes ATP-dependent nucleosome sliding. Plays an essential role in oncogenic transformation by MYC and also modulates transcriptional activation by the LEF1/TCF1-CTNNB1 complex. May also inhibit the transcriptional activity of ATF2. Involved in the endoplasmic reticulum (ER)-associated degradation (ERAD) pathway where it negatively regulates expression of ER stress response genes. May play a role in regulating the composition of the U5 snRNP complex. This is RuvB-like 2 (RUVBL2) from Bos taurus (Bovine).